Here is a 175-residue protein sequence, read N- to C-terminus: MSEQKIEVVGKLGSTYGIRGWLRLYSSTEKAESIFDYQPWFLKIKGQWQLIELESWRYHSNDLIVKLKGTEDREAAQLLTNAEIGVDLSVFPKLGEEDYYWHDLINCQVVNLENYTMGVVTELMETGSNDVLVVRANSKDAFGKQERLIPFLYKQVVKRVDLSTKTITVDWDAGF.

The PRC barrel domain maps to 96–175 (EEDYYWHDLI…TITVDWDAGF (80 aa)).

Belongs to the RimM family. As to quaternary structure, binds ribosomal protein uS19.

It is found in the cytoplasm. Functionally, an accessory protein needed during the final step in the assembly of 30S ribosomal subunit, possibly for assembly of the head region. Essential for efficient processing of 16S rRNA. May be needed both before and after RbfA during the maturation of 16S rRNA. It has affinity for free ribosomal 30S subunits but not for 70S ribosomes. In Haemophilus ducreyi (strain 35000HP / ATCC 700724), this protein is Ribosome maturation factor RimM.